A 480-amino-acid polypeptide reads, in one-letter code: Immune evasion protein OPG047 (480 aa).

In terms of domain architecture, BTB spans 10 to 90; sequence CKNILALSMT…SYTGKVYIDS (81 aa). A BACK domain is found at 125 to 223; it reads CVECYMMGIE…NYLSPRGINN (99 aa). Kelch repeat units follow at residues 273 to 319, 320 to 363, 365 to 408, 410 to 447, and 448 to 480; these read VVYL…PANN, KLYV…SINN, IYVM…VFGR, LFLV…IVDN, and KLLL…WDGK.

The protein belongs to the orthopoxvirus OPG047 family.

Might have a role in the suppression of host immune response. The chain is Immune evasion protein OPG047 (OPG047) from Vaccinia virus (strain Copenhagen) (VACV).